The primary structure comprises 415 residues: Ribulose bisphosphate carboxylase large chain (415 aa).

Asn101 and Thr151 together coordinate substrate. Catalysis depends on Lys153, which acts as the Proton acceptor. Lys155 is a binding site for substrate. 3 residues coordinate Mg(2+): Lys179, Asp181, and Glu182. N6-carboxylysine is present on Lys179. His272 acts as the Proton acceptor in catalysis. Substrate is bound by residues Arg273, His305, and Ser357.

Belongs to the RuBisCO large chain family. Type I subfamily. In terms of assembly, heterohexadecamer of 8 large chains and 8 small chains; disulfide-linked. The disulfide link is formed within the large subunit homodimers. Mg(2+) serves as cofactor. Post-translationally, the disulfide bond which can form in the large chain dimeric partners within the hexadecamer appears to be associated with oxidative stress and protein turnover.

Its subcellular location is the plastid. The protein localises to the chloroplast. The enzyme catalyses 2 (2R)-3-phosphoglycerate + 2 H(+) = D-ribulose 1,5-bisphosphate + CO2 + H2O. It catalyses the reaction D-ribulose 1,5-bisphosphate + O2 = 2-phosphoglycolate + (2R)-3-phosphoglycerate + 2 H(+). In terms of biological role, ruBisCO catalyzes two reactions: the carboxylation of D-ribulose 1,5-bisphosphate, the primary event in carbon dioxide fixation, as well as the oxidative fragmentation of the pentose substrate in the photorespiration process. Both reactions occur simultaneously and in competition at the same active site. The chain is Ribulose bisphosphate carboxylase large chain from Cibotium barometz (Scythian lamb).